A 121-amino-acid chain; its full sequence is Holo-[acyl-carrier-protein] synthase (121 aa).

Mg(2+) contacts are provided by Asp5 and Glu50.

The protein belongs to the P-Pant transferase superfamily. AcpS family. Mg(2+) serves as cofactor.

It localises to the cytoplasm. The catalysed reaction is apo-[ACP] + CoA = holo-[ACP] + adenosine 3',5'-bisphosphate + H(+). Its function is as follows. Transfers the 4'-phosphopantetheine moiety from coenzyme A to a Ser of acyl-carrier-protein. The polypeptide is Holo-[acyl-carrier-protein] synthase (Sulfurimonas denitrificans (strain ATCC 33889 / DSM 1251) (Thiomicrospira denitrificans (strain ATCC 33889 / DSM 1251))).